The primary structure comprises 1123 residues: uncharacterized protein (1123 aa).

Disordered stretches follow at residues 136-229 (LGES…PKLT), 262-471 (MLQY…LNQH), 483-514 (LSSI…SPNL), 527-609 (KKIN…QSDD), 629-769 (SILC…NNIS), 782-812 (LKPK…NSSS), 835-1005 (ITNN…GESN), and 1070-1099 (NNNN…NNNI). Residues 166-185 (GGNGGNSGTNGDGDDGGCSL) show a composition bias toward gly residues. Positions 190–199 (DENDYEDGMV) are enriched in acidic residues. Over residues 211 to 223 (SGDGGGGGGGGGD) the composition is skewed to gly residues. Over residues 262 to 322 (MLQYQQQQQQ…TTTTHSNNSN (61 aa)) the composition is skewed to low complexity. The segment covering 329 to 343 (PLNNSNSNIHFLTNQ) has biased composition (polar residues). Low complexity-rich tracts occupy residues 344–387 (QNSD…SNLN), 397–464 (STST…SSSS), 489–499 (NNKENNNNNNN), 527–548 (KKIN…NISS), and 563–585 (HQQQ…QQHQ). Residues 590-604 (SKSSSELQVPSSNYH) are compositionally biased toward polar residues. Basic and acidic residues predominate over residues 632-646 (CKDDSKTNTNKDKDN). 2 stretches are compositionally biased toward low complexity: residues 647-707 (NNSN…INNN) and 727-769 (SVSS…NNIS). A compositionally biased stretch (polar residues) spans 790–799 (SSPSIPTTSP). Low complexity-rich tracts occupy residues 835–984 (ITNN…NNNI) and 1070–1098 (NNNN…NNNN).

This is an uncharacterized protein from Dictyostelium discoideum (Social amoeba).